Consider the following 417-residue polypeptide: D-amino acid dehydrogenase (417 aa).

3 to 17 serves as a coordination point for FAD; it reads VVILGSGVIGVTSAW.

The protein belongs to the DadA oxidoreductase family. Requires FAD as cofactor.

It catalyses the reaction a D-alpha-amino acid + A + H2O = a 2-oxocarboxylate + AH2 + NH4(+). It participates in amino-acid degradation; D-alanine degradation; NH(3) and pyruvate from D-alanine: step 1/1. Its function is as follows. Oxidative deamination of D-amino acids. The protein is D-amino acid dehydrogenase of Edwardsiella ictaluri (strain 93-146).